The sequence spans 162 residues: CD-NTase-associated protein 7 (162 aa).

The tract at residues 138–162 (HSGLTQSGGREYSSNGYGMQRKDYN) is disordered. Over residues 139-154 (SGLTQSGGREYSSNGY) the composition is skewed to polar residues.

The protein belongs to the HORMA family. HORMA1 subfamily. In terms of assembly, forms complexes with CdnC with 1:1 and 2:2 stoichimetry, and a 1:1:6 CdnC:Cap7:Cap6 complex.

Functionally, sensor protein of a CBASS antivirus system. CBASS (cyclic oligonucleotide-based antiphage signaling system) provides immunity against bacteriophage. The CD-NTase protein synthesizes cyclic nucleotides in response to infection; these serve as specific second messenger signals. The signals activate a diverse range of effectors, leading to bacterial cell death and thus abortive phage infection. A type III CBASS system. Expression of this CBASS system (Cap18-Cap6-Cap7-CdnC-CapW-Cap17) in a susceptible E.coli (strain MG1655) confers resistance to bacteriophage P1. The sensor protein for this CBASS system. Binds to a closure peptide, which allows it to activate CdnC for second messenger synthesis. The protein is CD-NTase-associated protein 7 of Escherichia coli (strain KTE188).